The chain runs to 175 residues: Alpha-crystallin B chain (175 aa).

At methionine 1 the chain carries N-acetylmethionine. Phosphoserine is present on serine 19. An O-linked (GlcNAc) serine glycan is attached at serine 41. Phosphoserine is present on residues serine 45 and serine 59. Residues 56 to 164 enclose the sHSP domain; sequence RAPSWIDTGL…PERTIPITRE (109 aa). Zn(2+) is bound at residue histidine 83. N6-acetyllysine is present on lysine 92. The Zn(2+) site is built by histidine 104, glutamate 106, histidine 111, and histidine 119. Residues 142–175 form a disordered region; sequence VLTVNGPRKQAPGPERTIPITREEKPAVTAAPKK. The residue at position 166 (lysine 166) is an N6-acetyllysine. The O-linked (GlcNAc) threonine glycan is linked to threonine 170.

The protein belongs to the small heat shock protein (HSP20) family. As to quaternary structure, heteromer composed of three CRYAA and one CRYAB subunits. Aggregates with homologous proteins, including the small heat shock protein HSPB1, to form large heteromeric complexes. Inter-subunit bridging via zinc ions enhances stability, which is crucial as there is no protein turn over in the lens. Interacts with HSPBAP1 and TTN/titin. Interacts with TMEM109; in the cellular response to DNA damage. Interacts with DES; binds rapidly during early stages of DES filament assembly and a reduced binding seen in the later stages. Interacts with TMED10; the interaction mediates the translocation from the cytoplasm into the ERGIC (endoplasmic reticulum-Golgi intermediate compartment) and thereby secretion. Interacts with ATP6V1A and with MTOR, forming a ternary complex. Lens as well as other tissues.

The protein resides in the cytoplasm. It localises to the nucleus. It is found in the secreted. Its subcellular location is the lysosome. In terms of biological role, may contribute to the transparency and refractive index of the lens. Has chaperone-like activity, preventing aggregation of various proteins under a wide range of stress conditions. In lens epithelial cells, stabilizes the ATP6V1A protein, preventing its degradation by the proteasome. In Oryctolagus cuniculus (Rabbit), this protein is Alpha-crystallin B chain (CRYAB).